A 70-amino-acid chain; its full sequence is Brevinin-1PLb (70 aa).

The N-terminal stretch at 1–22 (MFTTKKSMLLLFFLGTINLSLC) is a signal peptide. The propeptide occupies 23-44 (EEERNAEEERRDEPDEMNVEVE). A disulfide bond links Cys64 and Cys70.

As to expression, expressed by the skin glands.

Its subcellular location is the secreted. Antimicrobial activity against the Gram-negative bacterium E.coli, the Gram-positive bacterium S.aureus and the yeast C.albicans. In Lithobates palustris (Pickerel frog), this protein is Brevinin-1PLb.